We begin with the raw amino-acid sequence, 481 residues long: MQLFYVPLLSLFVLFVSLSFYFLFYKSKSGSTSGLPLPPGKTGWPVIGESFEFLSTGWKGYPEKFIFDRLAKYSSNVFKTSLFGQPAAAFCGAACNKFLFSNENKLVQAWWPDSVNKVFPSSTQTSSKEEAIKMRKLLPNFLKPEALQRYVGVMDQIATKHFKSGWENKKEVLVFPLAKNYTFWIACKVFVSVEEPTQVAKLLEPFNAIASGIISVPIDLPGTPFNSAIKSSKIVRDKLMGIIKQRKTDLGEGKASPTQDILSHMLLTSDENGKFMTEGDIADKILGLLIGGHDTASSACTFVVKFLAELPEIYEGVYKEQMEIAKSKKAGELLNWEDIQKMKYSWNVACEVLRLAPPLQGAFREALTDFSYNGFSIPKGWKLYWSANSTHRNSEVFPEPLKFDPSRFEGAGPPPYSFVPFGGGPRMCPGKEYARLEILVFMHHVVKRFKWEKVIPDEKIVVNPMPIPAKGLPVRLFPHKA.

Residues 4-24 (FYVPLLSLFVLFVSLSFYFLF) form a helical membrane-spanning segment. A heme-binding site is contributed by Cys-428.

This sequence belongs to the cytochrome P450 family. Heme serves as cofactor.

It localises to the membrane. The enzyme catalyses beta-amyrin + 3 reduced [NADPH--hemoprotein reductase] + 3 O2 = oleanolate + 3 oxidized [NADPH--hemoprotein reductase] + 4 H2O + 4 H(+). Functionally, catalyzes the oxidation of the methyl group to a carboxyl group at the C-28 position of beta-amyrin to form oleanolate. This is Beta-amyrin 28-monooxygenase from Kalopanax septemlobus (Castor aralia).